The primary structure comprises 217 residues: UPF0323 lipoprotein HPSH_01205 (217 aa).

A signal peptide spans 1-27; that stretch reads MKKPYRKISDYAIVGGLSALVMVSIVG. Cysteine 28 carries N-palmitoyl cysteine lipidation. Residue cysteine 28 is the site of S-diacylglycerol cysteine attachment. The span at 160 to 171 shows a compositional bias: polar residues; that stretch reads QRTYKSPQAYQR. The segment at 160-217 is disordered; it reads QRTYKSPQAYQRSQNSFSKSAPSASSMGGASKGQSGFFGSSRPTSSPAVSSGTRGFNS. Positions 172-210 are enriched in low complexity; that stretch reads SQNSFSKSAPSASSMGGASKGQSGFFGSSRPTSSPAVSS.

The protein belongs to the UPF0323 family.

The protein localises to the cell membrane. The chain is UPF0323 lipoprotein HPSH_01205 from Helicobacter pylori (strain Shi470).